Here is a 287-residue protein sequence, read N- to C-terminus: MKRIFLLIATNMAILLVASIVMSILGVNTSTMGGLLVFAAIFGFGGAFISLAISKWMAKKTMGCEVITTPRDNMERWLVDTVARQAEQAGIKMPEVAIYQSPELNAFATGPSKDNSLVAVSSGLLYGMTQDEIEGVLAHEVSHVANGDMVTLTLIQGVVNTFVIFAARVVASIIDNFVASNDEEGEGLGMFAYMAVVFVLDMLFGILASMIVAYFSRVREFKADAGGAQLAGKHKMIAALDRLRQGPETGAMPAQMAAFGINGKKSMAELMMSHPPLEKRIEALRAQ.

A run of 2 helical transmembrane segments spans residues 4–24 and 33–53; these read IFLLIATNMAILLVASIVMSI and GGLLVFAAIFGFGGAFISLAI. His-139 is a binding site for Zn(2+). Residue Glu-140 is part of the active site. His-143 is a Zn(2+) binding site. 2 helical membrane-spanning segments follow: residues 154–174 and 195–215; these read LIQGVVNTFVIFAARVVASII and AVVFVLDMLFGILASMIVAYF. Glu-220 provides a ligand contact to Zn(2+).

This sequence belongs to the peptidase M48B family. Zn(2+) serves as cofactor.

The protein resides in the cell inner membrane. The protein is Protease HtpX of Shewanella loihica (strain ATCC BAA-1088 / PV-4).